Reading from the N-terminus, the 204-residue chain is HTH-type transcriptional repressor KstR2 (204 aa).

Residues 13–73 (SGRRTELLDI…EILRGFLDDL (61 aa)) form the HTH tetR-type domain. The H-T-H motif DNA-binding region spans 36–55 (TVRDIADAAGILSGSLYHHF).

In terms of assembly, homodimer.

In terms of biological role, controls the expression of a small regulon that may play a role in the utilization of cholesterol. This Rhodococcus jostii (strain RHA1) protein is HTH-type transcriptional repressor KstR2 (kstR2).